The primary structure comprises 202 residues: Large ribosomal subunit protein uL5 (202 aa).

Low complexity predominate over residues 1–17 (MSAKAATKNATKVAVKA). Residues 1-30 (MSAKAATKNATKVAVKAPEATTPVETKKSK) are disordered.

The protein belongs to the universal ribosomal protein uL5 family. In terms of assembly, component of the large ribosomal subunit.

The protein resides in the nucleus. It is found in the cytoplasm. Functionally, component of the ribosome, a large ribonucleoprotein complex responsible for the synthesis of proteins in the cell. The small ribosomal subunit (SSU) binds messenger RNAs (mRNAs) and translates the encoded message by selecting cognate aminoacyl-transfer RNA (tRNA) molecules. The large subunit (LSU) contains the ribosomal catalytic site termed the peptidyl transferase center (PTC), which catalyzes the formation of peptide bonds, thereby polymerizing the amino acids delivered by tRNAs into a polypeptide chain. The nascent polypeptides leave the ribosome through a tunnel in the LSU and interact with protein factors that function in enzymatic processing, targeting, and the membrane insertion of nascent chains at the exit of the ribosomal tunnel. The polypeptide is Large ribosomal subunit protein uL5 (rpl11) (Dictyostelium discoideum (Social amoeba)).